The chain runs to 84 residues: Small ribosomal subunit protein uS17 (84 aa).

This sequence belongs to the universal ribosomal protein uS17 family. Part of the 30S ribosomal subunit.

In terms of biological role, one of the primary rRNA binding proteins, it binds specifically to the 5'-end of 16S ribosomal RNA. This chain is Small ribosomal subunit protein uS17, found in Klebsiella pneumoniae subsp. pneumoniae (strain ATCC 700721 / MGH 78578).